A 419-amino-acid polypeptide reads, in one-letter code: Lipoyl synthase, mitochondrial (419 aa).

A mitochondrion-targeting transit peptide spans 1-26 (MAVCAGRLKCFGNPAVSLRTAASRAY). Low complexity predominate over residues 28–47 (TTTSPDPAIPSSSSASSSSA). The tract at residues 28-61 (TTTSPDPAIPSSSSASSSSALPKRPQTSFRDKLN) is disordered. [4Fe-4S] cluster-binding residues include Cys-136, Cys-141, Cys-147, Cys-167, Cys-171, Cys-174, and Ser-382. In terms of domain architecture, Radical SAM core spans 150–371 (GSSKSAATAT…KDRALEMGFL (222 aa)). The disordered stretch occupies residues 399 to 419 (AESTGPESTNVPNVTPDAIVR).

The protein belongs to the radical SAM superfamily. Lipoyl synthase family. The cofactor is [4Fe-4S] cluster.

The protein resides in the mitochondrion. It catalyses the reaction [[Fe-S] cluster scaffold protein carrying a second [4Fe-4S](2+) cluster] + N(6)-octanoyl-L-lysyl-[protein] + 2 oxidized [2Fe-2S]-[ferredoxin] + 2 S-adenosyl-L-methionine + 4 H(+) = [[Fe-S] cluster scaffold protein] + N(6)-[(R)-dihydrolipoyl]-L-lysyl-[protein] + 4 Fe(3+) + 2 hydrogen sulfide + 2 5'-deoxyadenosine + 2 L-methionine + 2 reduced [2Fe-2S]-[ferredoxin]. It functions in the pathway protein modification; protein lipoylation via endogenous pathway; protein N(6)-(lipoyl)lysine from octanoyl-[acyl-carrier-protein]: step 2/2. Functionally, catalyzes the radical-mediated insertion of two sulfur atoms into the C-6 and C-8 positions of the octanoyl moiety bound to the lipoyl domains of lipoate-dependent enzymes, thereby converting the octanoylated domains into lipoylated derivatives. In Coccidioides posadasii (strain C735) (Valley fever fungus), this protein is Lipoyl synthase, mitochondrial.